The sequence spans 511 residues: ADP,ATP carrier protein 4 (511 aa).

Helical transmembrane passes span 34–54 (VSKF…QNLI), 71–91 (ISFL…AIYV), 102–122 (IFYL…YVIF), 157–177 (FSLF…LLFW), 192–212 (FYPL…QFLE), 231–251 (FHTL…IIAI), 296–316 (LIAT…GPWK), 330–350 (AAFI…FVVL), 361–381 (FTAA…FFAV), 390–410 (LIIA…IGAI), 453–473 (LGKS…PSAS), and 476–496 (SISI…LWAT).

Belongs to the ADP/ATP translocase tlc family.

It localises to the cell membrane. Its function is as follows. Provides the rickettsial cell with host ATP in exchange for rickettsial ADP. This is an obligate exchange system. This energy acquiring activity is an important component of rickettsial parasitism. In Rickettsia felis (strain ATCC VR-1525 / URRWXCal2) (Rickettsia azadi), this protein is ADP,ATP carrier protein 4 (tlcD).